Reading from the N-terminus, the 552-residue chain is Phosphoglucomutase (552 aa).

The active-site Phosphoserine intermediate is the serine 143. Residues serine 143, aspartate 295, aspartate 297, and aspartate 299 each coordinate Mg(2+).

The protein belongs to the phosphohexose mutase family. Mg(2+) serves as cofactor.

It carries out the reaction alpha-D-glucose 1-phosphate = alpha-D-glucose 6-phosphate. It functions in the pathway glycolipid metabolism; diglucosyl-diacylglycerol biosynthesis. Its function is as follows. Catalyzes the interconversion between glucose-6-phosphate and alpha-glucose-1-phosphate. This is the first step in the biosynthesis of diglucosyl-diacylglycerol (Glc2-DAG), i.e. the predominant glycolipid found in the S.aureus membrane, which is also used as a membrane anchor for lipoteichoic acid (LTA). The polypeptide is Phosphoglucomutase (pgcA) (Staphylococcus aureus (strain MSSA476)).